Reading from the N-terminus, the 195-residue chain is Glycerol-3-phosphate acyltransferase (195 aa).

Helical transmembrane passes span 3-23, 53-73, 80-100, 115-135, and 147-167; these read IHAV…GLIL, AVMT…LAKI, FAFI…WLLF, LIEY…FAIF, and IFVA…VFIA.

Belongs to the PlsY family. As to quaternary structure, probably interacts with PlsX.

It localises to the cell inner membrane. The enzyme catalyses an acyl phosphate + sn-glycerol 3-phosphate = a 1-acyl-sn-glycero-3-phosphate + phosphate. The protein operates within lipid metabolism; phospholipid metabolism. Catalyzes the transfer of an acyl group from acyl-phosphate (acyl-PO(4)) to glycerol-3-phosphate (G3P) to form lysophosphatidic acid (LPA). This enzyme utilizes acyl-phosphate as fatty acyl donor, but not acyl-CoA or acyl-ACP. In Ehrlichia chaffeensis (strain ATCC CRL-10679 / Arkansas), this protein is Glycerol-3-phosphate acyltransferase.